Consider the following 498-residue polypeptide: Cobyric acid synthase (498 aa).

Residues 257 to 447 form the GATase cobBQ-type domain; sequence DLEIAVLRLP…LHGLLDNGPW (191 aa). The active-site Nucleophile is Cys338. The active site involves His439.

Belongs to the CobB/CobQ family. CobQ subfamily.

The protein operates within cofactor biosynthesis; adenosylcobalamin biosynthesis. Its function is as follows. Catalyzes amidations at positions B, D, E, and G on adenosylcobyrinic A,C-diamide. NH(2) groups are provided by glutamine, and one molecule of ATP is hydrogenolyzed for each amidation. This Synechococcus sp. (strain CC9605) protein is Cobyric acid synthase.